A 400-amino-acid polypeptide reads, in one-letter code: Acetate kinase (400 aa).

Mg(2+) is bound at residue asparagine 10. Lysine 17 lines the ATP pocket. Arginine 91 is a substrate binding site. Aspartate 150 (proton donor/acceptor) is an active-site residue. ATP is bound by residues 210–214, 285–287, and 333–337; these read HLGNG, DCR, and GIGEN. Glutamate 387 provides a ligand contact to Mg(2+).

It belongs to the acetokinase family. As to quaternary structure, homodimer. Requires Mg(2+) as cofactor. The cofactor is Mn(2+).

It is found in the cytoplasm. It catalyses the reaction acetate + ATP = acetyl phosphate + ADP. Its pathway is metabolic intermediate biosynthesis; acetyl-CoA biosynthesis; acetyl-CoA from acetate: step 1/2. Its function is as follows. Catalyzes the formation of acetyl phosphate from acetate and ATP. Can also catalyze the reverse reaction. This Yersinia pseudotuberculosis serotype IB (strain PB1/+) protein is Acetate kinase.